Reading from the N-terminus, the 359-residue chain is Alanine racemase (359 aa).

The Proton acceptor; specific for D-alanine role is filled by Lys-35. Position 35 is an N6-(pyridoxal phosphate)lysine (Lys-35). Arg-131 contributes to the substrate binding site. Tyr-253 (proton acceptor; specific for L-alanine) is an active-site residue. Met-301 is a substrate binding site.

The protein belongs to the alanine racemase family. Pyridoxal 5'-phosphate serves as cofactor.

It carries out the reaction L-alanine = D-alanine. Its pathway is amino-acid biosynthesis; D-alanine biosynthesis; D-alanine from L-alanine: step 1/1. In terms of biological role, catalyzes the interconversion of L-alanine and D-alanine. May also act on other amino acids. This is Alanine racemase (alr) from Laribacter hongkongensis (strain HLHK9).